A 192-amino-acid chain; its full sequence is Elongation factor P (192 aa).

This sequence belongs to the elongation factor P family.

The protein localises to the cytoplasm. Its pathway is protein biosynthesis; polypeptide chain elongation. Its function is as follows. Involved in peptide bond synthesis. Stimulates efficient translation and peptide-bond synthesis on native or reconstituted 70S ribosomes in vitro. Probably functions indirectly by altering the affinity of the ribosome for aminoacyl-tRNA, thus increasing their reactivity as acceptors for peptidyl transferase. This chain is Elongation factor P (efp), found in Aquifex aeolicus (strain VF5).